The following is a 362-amino-acid chain: Chorismate synthase (362 aa).

NADP(+)-binding residues include arginine 47 and arginine 53. FMN contacts are provided by residues 124 to 126, glycine 285, 300 to 304, and arginine 326; these read RSS and KPTAT.

This sequence belongs to the chorismate synthase family. In terms of assembly, homotetramer. Requires FMNH2 as cofactor.

The enzyme catalyses 5-O-(1-carboxyvinyl)-3-phosphoshikimate = chorismate + phosphate. It functions in the pathway metabolic intermediate biosynthesis; chorismate biosynthesis; chorismate from D-erythrose 4-phosphate and phosphoenolpyruvate: step 7/7. Its function is as follows. Catalyzes the anti-1,4-elimination of the C-3 phosphate and the C-6 proR hydrogen from 5-enolpyruvylshikimate-3-phosphate (EPSP) to yield chorismate, which is the branch point compound that serves as the starting substrate for the three terminal pathways of aromatic amino acid biosynthesis. This reaction introduces a second double bond into the aromatic ring system. The polypeptide is Chorismate synthase (Cyanothece sp. (strain PCC 7425 / ATCC 29141)).